The sequence spans 207 residues: 2,3-bisphosphoglycerate-dependent phosphoglycerate mutase (207 aa).

Substrate contacts are provided by residues 9-16 (RHGQSDWN), 22-23 (TG), R61, 88-91 (ERDY), K99, 115-116 (RR), and 159-160 (GN). H10 (tele-phosphohistidine intermediate) is an active-site residue. Catalysis depends on E88, which acts as the Proton donor/acceptor.

This sequence belongs to the phosphoglycerate mutase family. BPG-dependent PGAM subfamily. In terms of assembly, homodimer.

It catalyses the reaction (2R)-2-phosphoglycerate = (2R)-3-phosphoglycerate. Its pathway is carbohydrate degradation; glycolysis; pyruvate from D-glyceraldehyde 3-phosphate: step 3/5. Functionally, catalyzes the interconversion of 2-phosphoglycerate and 3-phosphoglycerate. This Beijerinckia indica subsp. indica (strain ATCC 9039 / DSM 1715 / NCIMB 8712) protein is 2,3-bisphosphoglycerate-dependent phosphoglycerate mutase.